Here is a 481-residue protein sequence, read N- to C-terminus: Cobyric acid synthase (481 aa).

The GATase cobBQ-type domain maps to 248 to 435; sequence ALTVAWLAFS…LHGMFGSDRF (188 aa). The active-site Nucleophile is cysteine 330. The active site involves histidine 427.

It belongs to the CobB/CobQ family. CobQ subfamily.

The protein operates within cofactor biosynthesis; adenosylcobalamin biosynthesis. Its function is as follows. Catalyzes amidations at positions B, D, E, and G on adenosylcobyrinic A,C-diamide. NH(2) groups are provided by glutamine, and one molecule of ATP is hydrogenolyzed for each amidation. This is Cobyric acid synthase from Cereibacter sphaeroides (strain ATCC 17025 / ATH 2.4.3) (Rhodobacter sphaeroides).